The sequence spans 501 residues: 7-alpha-hydroxycholest-4-en-3-one 12-alpha-hydroxylase (501 aa).

Residues 1-21 (MVLWGPVLGALLVVIAGYLCL) form a helical membrane-spanning segment. Serine 326 is subject to Phosphoserine. Cysteine 440 serves as a coordination point for heme.

Belongs to the cytochrome P450 family. The cofactor is heme. Liver.

The protein resides in the endoplasmic reticulum membrane. The protein localises to the microsome membrane. The catalysed reaction is 7alpha-hydroxycholest-4-en-3-one + reduced [NADPH--hemoprotein reductase] + O2 = 7alpha,12alpha-dihydroxycholest-4-en-3-one + oxidized [NADPH--hemoprotein reductase] + H2O + H(+). The enzyme catalyses 5beta-cholestane-3alpha,7alpha-diol + reduced [NADPH--hemoprotein reductase] + O2 = 5beta-cholestane-3alpha,7alpha,12alpha-triol + oxidized [NADPH--hemoprotein reductase] + H2O + H(+). It carries out the reaction chenodeoxycholate + reduced [NADPH--hemoprotein reductase] + O2 = cholate + oxidized [NADPH--hemoprotein reductase] + H2O + H(+). It functions in the pathway lipid metabolism; bile acid biosynthesis. In terms of biological role, a cytochrome P450 monooxygenase involved in primary bile acid biosynthesis. Catalyzes the 12alpha-hydroxylation of 7alpha-hydroxy-4-cholesten-3-one, an intermediate metabolite in cholic acid biosynthesis. Controls biliary balance of cholic acid and chenodeoxycholic acid, ultimately regulating the intestinal absorption of dietary lipids. Mechanistically, uses molecular oxygen inserting one oxygen atom into a substrate, and reducing the second into a water molecule, with two electrons provided by NADPH via cytochrome P450 reductase (CPR; NADPH--hemoprotein reductase). The polypeptide is 7-alpha-hydroxycholest-4-en-3-one 12-alpha-hydroxylase (Homo sapiens (Human)).